Here is a 514-residue protein sequence, read N- to C-terminus: MTNIQAFMKNFLGASPEWYKLAIVVFLIINPIVFFFISPFIAGWLLVAEFIFTLAMALKCYPLQPGGLLAIEAIIIGMTNAKHVKAEIMANFEVILLLIFMVAGIFFMKQLLLYVFTKLLVKIRSKIALSIAFCFSAAFLSAFLDALTVVAVIISVAMGFYGVYHKVASGNNLIDAVDISDDRKIIEQQHEILEKFRAFLRSLMMHAGVGTALGGVMTVVGEPQNLIIAEQAKWNFMEFFLRMAPVTIPVFICGLLTCFLVEKFKLFGYGEKLPDEVWKILSDLDRTNSEKMSKQDKIKLGMQALIAIWLIVGLAFHLAAVGLIGLSIIIFATSFTGVTDEHTIGKAFQESLPFTALLVVFFSVVAVIIDQKLFSPIIHFVLSAEENTQLALFYLFNGLLSSISDNVFVATVYINEAKAALTNGVIAPHQFELLSVAINTGTNLPSVATPNGQAAFLFLLTSSISPLIRLSYGRMVYMALPYTIVLSIIGLLAIEFILPAATIWLASLGLILPI.

The next 11 membrane-spanning stretches (helical) occupy residues 21–41 (LAIVVFLIINPIVFFFISPFI), 43–63 (GWLLVAEFIFTLAMALKCYPL), 88–108 (IMANFEVILLLIFMVAGIFFM), 143–163 (FLDALTVVAVIISVAMGFYGV), 203–223 (LMMHAGVGTALGGVMTVVGEP), 239–259 (FFLRMAPVTIPVFICGLLTCF), 304–324 (ALIAIWLIVGLAFHLAAVGLI), 349–369 (QESLPFTALLVVFFSVVAVII), 390–410 (LALFYLFNGLLSSISDNVFVA), 448–468 (ATPNGQAAFLFLLTSSISPLI), and 484–504 (IVLSIIGLLAIEFILPAATIW).

It belongs to the NhaB Na(+)/H(+) (TC 2.A.34) antiporter family.

It localises to the cell inner membrane. The catalysed reaction is 2 Na(+)(in) + 3 H(+)(out) = 2 Na(+)(out) + 3 H(+)(in). Functionally, na(+)/H(+) antiporter that extrudes sodium in exchange for external protons. The chain is Na(+)/H(+) antiporter NhaB from Haemophilus influenzae (strain ATCC 51907 / DSM 11121 / KW20 / Rd).